Consider the following 80-residue polypeptide: Putative ATP-dependent Clp protease proteolytic subunit (80 aa).

Residue His19 is part of the active site.

Belongs to the peptidase S14 family. As to quaternary structure, component of the chloroplastic Clp protease core complex.

The protein localises to the plastid. Its subcellular location is the chloroplast. The enzyme catalyses Hydrolysis of proteins to small peptides in the presence of ATP and magnesium. alpha-casein is the usual test substrate. In the absence of ATP, only oligopeptides shorter than five residues are hydrolyzed (such as succinyl-Leu-Tyr-|-NHMec, and Leu-Tyr-Leu-|-Tyr-Trp, in which cleavage of the -Tyr-|-Leu- and -Tyr-|-Trp bonds also occurs).. Cleaves peptides in various proteins in a process that requires ATP hydrolysis. Has a chymotrypsin-like activity. Plays a major role in the degradation of misfolded proteins. The chain is Putative ATP-dependent Clp protease proteolytic subunit from Pinus strobus (Eastern white pine).